A 114-amino-acid polypeptide reads, in one-letter code: Non-specific lipid-transfer protein 2 (114 aa).

The first 23 residues, 1–23 (MEMFGKIACFVVFCMVVVAPHAE), serve as a signal peptide directing secretion. Cystine bridges form between Cys-27–Cys-73, Cys-37–Cys-50, Cys-51–Cys-96, and Cys-71–Cys-110.

Belongs to the plant LTP family.

Functionally, plant non-specific lipid-transfer proteins transfer phospholipids as well as galactolipids across membranes. May play a role in wax or cutin deposition in the cell walls of expanding epidermal cells and certain secretory tissues. In Solanum lycopersicum (Tomato), this protein is Non-specific lipid-transfer protein 2 (LE16).